Consider the following 100-residue polypeptide: MSRVCDITGQGKSFGNKVSHSNRKTKRAYLVNLHNVTLVSDILNRKFKFKVSSRTLRTVNYKGGLDLYLLNTSSRKLTDKAQKIKKLVKNAVAKGVKVSL.

The protein belongs to the bacterial ribosomal protein bL28 family.

This chain is Large ribosomal subunit protein bL28, found in Ehrlichia chaffeensis (strain ATCC CRL-10679 / Arkansas).